We begin with the raw amino-acid sequence, 183 residues long: PLAT domain-containing protein 2 (183 aa).

Positions 1-25 (MMPRRDVLFLSLLLVIATVSAVALA) are cleaved as a signal peptide. The PLAT domain maps to 31–158 (CVYTFFLRTG…SPYELSAVRN (128 aa)).

The protein resides in the endoplasmic reticulum. Functionally, involved in response to abiotic stress. The sequence is that of PLAT domain-containing protein 2 from Arabidopsis thaliana (Mouse-ear cress).